The sequence spans 165 residues: uncharacterized protein (165 aa).

This sequence belongs to the IIV-6 196R family.

This is an uncharacterized protein from Invertebrate iridescent virus 3 (IIV-3).